A 164-amino-acid polypeptide reads, in one-letter code: Cyanate hydratase (164 aa).

Catalysis depends on residues Arg90, Glu93, and Ser116.

It belongs to the cyanase family.

It carries out the reaction cyanate + hydrogencarbonate + 3 H(+) = NH4(+) + 2 CO2. Functionally, catalyzes the reaction of cyanate with bicarbonate to produce ammonia and carbon dioxide. In Vitis vinifera (Grape), this protein is Cyanate hydratase.